Consider the following 262-residue polypeptide: ATP synthase subunit a (262 aa).

The next 6 membrane-spanning stretches (helical) occupy residues 24 to 44 (AVHLDTLFFSLLAGVIFLFVF), 84 to 104 (VIAPLALTIFCWVFIMNAIDL), 129 to 149 (DISATLGMSICVFFLILFYTV), 165 to 185 (PFNHWVFIPVNFILETVTLLA), 194 to 214 (LFGNMYAGELIFILIAVMYMA), and 228 to 248 (LVWAIFHILVITLQAFIFMML).

It belongs to the ATPase A chain family. F-type ATPases have 2 components, CF(1) - the catalytic core - and CF(0) - the membrane proton channel. CF(1) has five subunits: alpha(3), beta(3), gamma(1), delta(1), epsilon(1). CF(0) has three main subunits: a(1), b(2) and c(9-12). The alpha and beta chains form an alternating ring which encloses part of the gamma chain. CF(1) is attached to CF(0) by a central stalk formed by the gamma and epsilon chains, while a peripheral stalk is formed by the delta and b chains.

Its subcellular location is the cell inner membrane. In terms of biological role, key component of the proton channel; it plays a direct role in the translocation of protons across the membrane. The polypeptide is ATP synthase subunit a (Actinobacillus pleuropneumoniae serotype 7 (strain AP76)).